The sequence spans 155 residues: uncharacterized protein (155 aa).

The HTH asnC-type domain occupies 4–65 (IDEVDEIILR…IIDHSFLGEF (62 aa)). Positions 23–42 (LTELSRKVGLTPAAIKNRVE) form a DNA-binding region, H-T-H motif.

This is an uncharacterized protein from Pyrococcus furiosus (strain ATCC 43587 / DSM 3638 / JCM 8422 / Vc1).